A 198-amino-acid polypeptide reads, in one-letter code: 7-methyl-GTP pyrophosphatase (198 aa).

The active-site Proton acceptor is the Asp72.

Belongs to the Maf family. YceF subfamily. A divalent metal cation serves as cofactor.

The protein localises to the cytoplasm. The enzyme catalyses N(7)-methyl-GTP + H2O = N(7)-methyl-GMP + diphosphate + H(+). Functionally, nucleoside triphosphate pyrophosphatase that hydrolyzes 7-methyl-GTP (m(7)GTP). May have a dual role in cell division arrest and in preventing the incorporation of modified nucleotides into cellular nucleic acids. This Idiomarina loihiensis (strain ATCC BAA-735 / DSM 15497 / L2-TR) protein is 7-methyl-GTP pyrophosphatase.